The chain runs to 254 residues: Methyl-CpG-binding domain-containing protein 11 (254 aa).

Positions 4 to 74 (EEEVVSVELP…AEFDWTTSGT (71 aa)) constitute an MBD domain. Positions 56–254 (KSHPGNPAIA…EKTAEGEATG (199 aa)) are disordered. 4 stretches are compositionally biased toward basic and acidic residues: residues 80–97 (RISEKTKATPSPDKEPPK), 107–130 (SKKDAEGEKSEGGGEENSHVKDTE), 151–162 (ETERVNDAKENI), and 178–254 (ESMK…EATG). Residue S116 is modified to Phosphoserine.

Expressed in leaves (around hydathodes), buds, flowers (carpels and pollen grains), stems (around nodes), siliques, mature seeds and roots.

It localises to the nucleus. In terms of biological role, transcriptional regulator that binds DNA independently of its methylation status. Required during plant organogenesis and development. The polypeptide is Methyl-CpG-binding domain-containing protein 11 (MBD11) (Arabidopsis thaliana (Mouse-ear cress)).